Consider the following 794-residue polypeptide: cAMP and cAMP-inhibited cGMP 3',5'-cyclic phosphodiesterase 10A (794 aa).

3',5'-cyclic AMP contacts are provided by residues 296–297 (RC), 340–341 (IA), Thr-374, Gln-393, and His-525. Residues 452–769 (TSEEWQGLMH…NQWEKVIRGE (318 aa)) form the PDEase domain. His-525 serves as the catalytic Proton donor. His-525 is a 3',5'-cyclic GMP binding site. Residues His-529, His-563, Asp-564, and Asp-674 each contribute to the a divalent metal cation site. A 3',5'-cyclic AMP-binding site is contributed by Gln-726. Gln-726 provides a ligand contact to 3',5'-cyclic GMP.

The protein belongs to the cyclic nucleotide phosphodiesterase family. In terms of assembly, homodimer. The cofactor is a divalent metal cation. As to expression, detected in striatum and testis (at protein level). Detected in whole brain, hippocampus, olfactory bulb, striatum neurons and testis.

The protein localises to the cytoplasm. The protein resides in the cytosol. The enzyme catalyses a nucleoside 3',5'-cyclic phosphate + H2O = a nucleoside 5'-phosphate + H(+). It catalyses the reaction 3',5'-cyclic AMP + H2O = AMP + H(+). The catalysed reaction is 3',5'-cyclic GMP + H2O = GMP + H(+). It participates in purine metabolism; 3',5'-cyclic AMP degradation; AMP from 3',5'-cyclic AMP: step 1/1. It functions in the pathway purine metabolism; 3',5'-cyclic GMP degradation; GMP from 3',5'-cyclic GMP: step 1/1. Inhibited by dipyridamole and moderately by IBMX, zaprinast and rolipram. Functionally, plays a role in signal transduction by regulating the intracellular concentration of cyclic nucleotides. Can hydrolyze both cAMP and cGMP, but has higher affinity for cAMP and is more efficient with cAMP as substrate. The protein is cAMP and cAMP-inhibited cGMP 3',5'-cyclic phosphodiesterase 10A (Pde10a) of Rattus norvegicus (Rat).